Here is a 467-residue protein sequence, read N- to C-terminus: MSPQTETKASVGFKAGVKDYKLTYYTPDYETKDTDILAAFRVTPQPGVPPEEAGAAVAAESSTGTWTTVWTDGLTSLDRYKGRCYHTETVVGEENQYIAYVAYPLDLFEEGSVTNMFTSIVGNVFGFKALRALRLEDLRIPTSYSKTFQGPPHGIQVERDKLNKYGRPLLGCTIKPKLGLSAKNYGRAVYECLRGGLDFTKDDENVNSQPFMRWRDRFLFCAEAIYKAQAETGEIKGHYLNATAGTCEEMIKRAVFARELGVPIVMHDYLTGGFTANTSLAHYCRDNGLLLHIHRAMHAVIDRQKNHGMHFRVLAKALRMSGGDHIHAGTVVGKLEGEREMTLGFVDLLRDDFIEKDRSRGIFFTQDWVSMPGVIPVASGGIHVWHMPALTEIFGDDSVLQFGGGTLGHPWGNAPGAVANRVALEACVQARNEGRDLAREGNEIIREASKWSPELASACEVWKEIKF.

A propeptide spanning residues 1–2 is cleaved from the precursor; it reads MS. Proline 3 is subject to N-acetylproline. Lysine 14 carries the N6,N6,N6-trimethyllysine modification. 2 residues coordinate substrate: asparagine 123 and threonine 173. Lysine 175 functions as the Proton acceptor in the catalytic mechanism. Lysine 177 contributes to the substrate binding site. Residues lysine 201, aspartate 203, and glutamate 204 each coordinate Mg(2+). N6-carboxylysine is present on lysine 201. Histidine 294 functions as the Proton acceptor in the catalytic mechanism. Substrate-binding residues include arginine 295, histidine 327, and serine 379.

The protein belongs to the RuBisCO large chain family. Type I subfamily. Heterohexadecamer of 8 large chains and 8 small chains; disulfide-linked. The disulfide link is formed within the large subunit homodimers. Requires Mg(2+) as cofactor. The disulfide bond which can form in the large chain dimeric partners within the hexadecamer appears to be associated with oxidative stress and protein turnover.

It localises to the plastid. Its subcellular location is the chloroplast. It carries out the reaction 2 (2R)-3-phosphoglycerate + 2 H(+) = D-ribulose 1,5-bisphosphate + CO2 + H2O. The enzyme catalyses D-ribulose 1,5-bisphosphate + O2 = 2-phosphoglycolate + (2R)-3-phosphoglycerate + 2 H(+). In terms of biological role, ruBisCO catalyzes two reactions: the carboxylation of D-ribulose 1,5-bisphosphate, the primary event in carbon dioxide fixation, as well as the oxidative fragmentation of the pentose substrate in the photorespiration process. Both reactions occur simultaneously and in competition at the same active site. This is Ribulose bisphosphate carboxylase large chain from Serenoa repens (Saw palmetto).